The chain runs to 755 residues: Beta-galactosidase (755 aa).

The active-site Proton donor is the Glu-382. The Nucleophile role is filled by Glu-463.

Belongs to the glycosyl hydrolase 2 family.

The enzyme catalyses Hydrolysis of terminal non-reducing beta-D-galactose residues in beta-D-galactosides.. The protein is Beta-galactosidase (lacZ) of Rhizobium meliloti (Ensifer meliloti).